A 609-amino-acid polypeptide reads, in one-letter code: Threonine--tRNA ligase (609 aa).

Positions 1 to 143 (MRVLYLHTER…SFKPGDSRAE (143 aa)) are editing domain. 2 catalytic regions span residues 195–491 (PRYL…PRLP) and 196–491 (RYLE…PRLP). The Zn(2+) site is built by C288, H339, and H460.

Belongs to the class-II aminoacyl-tRNA synthetase family. As to quaternary structure, homodimer. Zn(2+) is required as a cofactor.

Its subcellular location is the cytoplasm. It carries out the reaction tRNA(Thr) + L-threonine + ATP = L-threonyl-tRNA(Thr) + AMP + diphosphate + H(+). In terms of biological role, catalyzes the attachment of threonine to tRNA(Thr) in a two-step reaction: L-threonine is first activated by ATP to form Thr-AMP and then transferred to the acceptor end of tRNA(Thr). Also edits incorrectly charged L-seryl-tRNA(Thr). This Pyrobaculum neutrophilum (strain DSM 2338 / JCM 9278 / NBRC 100436 / V24Sta) (Thermoproteus neutrophilus) protein is Threonine--tRNA ligase.